Here is a 302-residue protein sequence, read N- to C-terminus: Protein NEOXANTHIN-DEFICIENT 1 (302 aa).

Required for neoxanthin biosynthesis. Probably not involved directly in the enzymatic conversion of violaxanthin to neoxanthin. Is necessary but not sufficient for neoxanthin synthesis. This is Protein NEOXANTHIN-DEFICIENT 1 from Oryza sativa subsp. japonica (Rice).